The following is a 234-amino-acid chain: MPKILDAIIKASKINKKLLAVLIDPEKFATENYSYFIEKLPEAVTHIFVGGSTATTAQSEVCVDFIKTKTNLPVILFPGDKEQITEKADGILLLSLISGRNPEYLIEQHIKAVPKLLNAGLEIIPTGYLLLDGGNQSAVARVSKTKPIQQDEIELIRNTALAGAMLGKQLVYLEAGSGALIPVSEKVIAEVKRDLNIPLIVGGGIRNATQLKKAYKAGADLVVIGTAFENGEFK.

Mg(2+) is bound by residues aspartate 24 and serine 52. Sn-glycerol 1-phosphate is bound by residues 172-178 (YLEAGSG), 203-204 (GG), and 225-226 (GT).

Belongs to the GGGP/HepGP synthase family. Group II subfamily. Homodimer. The cofactor is Mg(2+).

The catalysed reaction is sn-glycerol 1-phosphate + (2E,6E,10E)-geranylgeranyl diphosphate = sn-3-O-(geranylgeranyl)glycerol 1-phosphate + diphosphate. Prenyltransferase that catalyzes the transfer of the geranylgeranyl moiety of geranylgeranyl diphosphate (GGPP) to the C3 hydroxyl of sn-glycerol-1-phosphate (G1P). The chain is Geranylgeranylglyceryl phosphate synthase from Zunongwangia profunda (strain DSM 18752 / CCTCC AB 206139 / SM-A87) (Wangia profunda).